A 100-amino-acid polypeptide reads, in one-letter code: UPF0125 protein HD_1828 (100 aa).

The protein belongs to the UPF0125 (RnfH) family.

This chain is UPF0125 protein HD_1828, found in Haemophilus ducreyi (strain 35000HP / ATCC 700724).